A 304-amino-acid chain; its full sequence is MRILFLGTPSFASEHLEFLIKNNFDVVAVISQPDKPKGRGKKVQPTPVKEVAQKYNIPVFQPTKLTSEGLSIIERYKPDLGIVVAYGKLLKPPFLNAIPFYNIHASLLPKYRGAAPIQRALENGESVTGITIFKIGEGMDDGPIALKKEISVGEFETFGSLYEKLLSLGKEALLEFLNNYPPNLYPQEGVPTYAPKISKEDLELDFSADYVTVKNKIRAYDPIPGVRSVLKGKIVKLFQVFYVEADENIKEYGKVLKINNEGGFISAKGGIVGIKYIQFPGKKPITFLDAKNGGLVKEGDKFES.

106-109 (SLLP) contributes to the (6S)-5,6,7,8-tetrahydrofolate binding site.

This sequence belongs to the Fmt family.

It catalyses the reaction L-methionyl-tRNA(fMet) + (6R)-10-formyltetrahydrofolate = N-formyl-L-methionyl-tRNA(fMet) + (6S)-5,6,7,8-tetrahydrofolate + H(+). Its function is as follows. Attaches a formyl group to the free amino group of methionyl-tRNA(fMet). The formyl group appears to play a dual role in the initiator identity of N-formylmethionyl-tRNA by promoting its recognition by IF2 and preventing the misappropriation of this tRNA by the elongation apparatus. The chain is Methionyl-tRNA formyltransferase from Thermosipho africanus (strain TCF52B).